Reading from the N-terminus, the 481-residue chain is Glucan endo-1,3-beta-glucosidase 8 (481 aa).

The first 33 residues, 1 to 33, serve as a signal peptide directing secretion; it reads MSNLLALVVGFVIVIGHLGILVNGLGVNWGTMA. N-linked (GlcNAc...) asparagine glycans are attached at residues Asn-99 and Asn-110. The active-site Proton donor is the Glu-119. Residues Asn-126 and Asn-131 are each glycosylated (N-linked (GlcNAc...) asparagine). Glu-265 serves as the catalytic Nucleophile. Cys-367 and Cys-428 form a disulfide bridge. Residues Asn-409 and Asn-440 are each glycosylated (N-linked (GlcNAc...) asparagine). A lipid anchor (GPI-anchor amidated serine) is attached at Ser-455. The propeptide at 456–481 is removed in mature form; sequence SASSFSCSSYSLVVLIVWFLLSGMMF.

The protein belongs to the glycosyl hydrolase 17 family. Post-translationally, contains two additional disulfide bonds.

It is found in the secreted. The protein localises to the cell wall. It localises to the cell membrane. It carries out the reaction Hydrolysis of (1-&gt;3)-beta-D-glucosidic linkages in (1-&gt;3)-beta-D-glucans.. The protein is Glucan endo-1,3-beta-glucosidase 8 of Arabidopsis thaliana (Mouse-ear cress).